The sequence spans 251 residues: Pyrroloquinoline-quinone synthase (251 aa).

It belongs to the PqqC family.

It carries out the reaction 6-(2-amino-2-carboxyethyl)-7,8-dioxo-1,2,3,4,7,8-hexahydroquinoline-2,4-dicarboxylate + 3 O2 = pyrroloquinoline quinone + 2 H2O2 + 2 H2O + H(+). It functions in the pathway cofactor biosynthesis; pyrroloquinoline quinone biosynthesis. Functionally, ring cyclization and eight-electron oxidation of 3a-(2-amino-2-carboxyethyl)-4,5-dioxo-4,5,6,7,8,9-hexahydroquinoline-7,9-dicarboxylic-acid to PQQ. This Pseudomonas putida (strain ATCC 700007 / DSM 6899 / JCM 31910 / BCRC 17059 / LMG 24140 / F1) protein is Pyrroloquinoline-quinone synthase.